A 331-amino-acid polypeptide reads, in one-letter code: Fructose-1,6-bisphosphatase class 1 2 (331 aa).

Mg(2+) is bound by residues Glu-80, Asp-98, Leu-100, and Asp-101. Substrate is bound by residues Asp-101–Ser-104 and Asn-189. Glu-261 is a binding site for Mg(2+).

The protein belongs to the FBPase class 1 family. In terms of assembly, homotetramer. The cofactor is Mg(2+).

Its subcellular location is the cytoplasm. It carries out the reaction beta-D-fructose 1,6-bisphosphate + H2O = beta-D-fructose 6-phosphate + phosphate. It participates in carbohydrate biosynthesis; Calvin cycle. The protein is Fructose-1,6-bisphosphatase class 1 2 of Cereibacter sphaeroides (strain ATCC 17029 / ATH 2.4.9) (Rhodobacter sphaeroides).